We begin with the raw amino-acid sequence, 1229 residues long: Putative cell division cycle ATPase (1229 aa).

Residues Gly252–Val267 show a composition bias toward low complexity. Residues Gly252–Glu315 are disordered. Positions Pro268–Asn281 are enriched in basic and acidic residues. Residues Asn282–Asn314 show a composition bias toward low complexity. Residue Gly568–Thr575 coordinates ATP. Disordered regions lie at residues Thr814 to Asp837 and Phe860 to Arg892. 2 stretches are compositionally biased toward basic and acidic residues: residues Asp819–Asp837 and Asn882–Arg892. Gly975 to Thr982 lines the ATP pocket.

This sequence belongs to the AAA ATPase family.

This is Putative cell division cycle ATPase from Plasmodium falciparum (isolate 3D7).